A 181-amino-acid chain; its full sequence is Probable integrase/recombinase YoeC (181 aa).

The Tyr recombinase domain maps to 3-176; the sequence is IVQPIRSLEK…DEDTTRAAYK (174 aa). Active-site residues include R40, K64, H128, R131, and H154. Catalysis depends on Y163, which acts as the O-(3'-phospho-DNA)-tyrosine intermediate.

The protein belongs to the 'phage' integrase family.

The polypeptide is Probable integrase/recombinase YoeC (yoeC) (Bacillus subtilis (strain 168)).